The primary structure comprises 171 residues: CDP-archaeol synthase (171 aa).

5 consecutive transmembrane segments (helical) span residues 7-27, 55-75, 84-104, 115-135, and 141-161; these read MFWA…PVLL, FLGG…LTPA, VLLA…GSFI, PAVG…AYPV, and GQML…NYFA.

It belongs to the CDP-archaeol synthase family. Mg(2+) is required as a cofactor.

The protein resides in the cell membrane. The catalysed reaction is 2,3-bis-O-(geranylgeranyl)-sn-glycerol 1-phosphate + CTP + H(+) = CDP-2,3-bis-O-(geranylgeranyl)-sn-glycerol + diphosphate. It functions in the pathway membrane lipid metabolism; glycerophospholipid metabolism. Catalyzes the formation of CDP-2,3-bis-(O-geranylgeranyl)-sn-glycerol (CDP-archaeol) from 2,3-bis-(O-geranylgeranyl)-sn-glycerol 1-phosphate (DGGGP) and CTP. This reaction is the third ether-bond-formation step in the biosynthesis of archaeal membrane lipids. This Thermococcus gammatolerans (strain DSM 15229 / JCM 11827 / EJ3) protein is CDP-archaeol synthase.